A 441-amino-acid polypeptide reads, in one-letter code: Mitochondrial distribution and morphology protein 12 (441 aa).

The region spanning 1-441 (MSIDIDWERA…VYPSFWTFLV (441 aa)) is the SMP-LTD domain. 2 disordered regions span residues 70–89 (YEDG…PMRE) and 180–289 (TPLR…RMRE). 2 stretches are compositionally biased toward polar residues: residues 226–245 (SRPS…SVST) and 253–263 (SSQTVLANNPG).

It belongs to the MDM12 family. As to quaternary structure, component of the ER-mitochondria encounter structure (ERMES) or MDM complex, composed of MMM1, MDM10, MDM12 and MDM34. An MMM1 homodimer associates with one molecule of MDM12 on each side in a pairwise head-to-tail manner, and the SMP-LTD domains of MMM1 and MDM12 generate a continuous hydrophobic tunnel for phospholipid trafficking.

Its subcellular location is the mitochondrion outer membrane. It is found in the endoplasmic reticulum membrane. Component of the ERMES/MDM complex, which serves as a molecular tether to connect the endoplasmic reticulum (ER) and mitochondria. Components of this complex are involved in the control of mitochondrial shape and protein biogenesis, and function in nonvesicular lipid trafficking between the ER and mitochondria. MDM12 is required for the interaction of the ER-resident membrane protein MMM1 and the outer mitochondrial membrane-resident beta-barrel protein MDM10. The MDM12-MMM1 subcomplex functions in the major beta-barrel assembly pathway that is responsible for biogenesis of all mitochondrial outer membrane beta-barrel proteins, and acts in a late step after the SAM complex. The MDM10-MDM12-MMM1 subcomplex further acts in the TOM40-specific pathway after the action of the MDM12-MMM1 complex. Essential for establishing and maintaining the structure of mitochondria and maintenance of mtDNA nucleoids. This chain is Mitochondrial distribution and morphology protein 12, found in Paracoccidioides brasiliensis (strain Pb03).